The following is a 112-amino-acid chain: Ferredoxin-2 (112 aa).

2 consecutive 4Fe-4S ferredoxin-type domains span residues 2–30 and 31–60; these read TYVVTDNCIACKYTDCVEVCPVDCFYEGE and NTLVIHPDECIDCGVCEPECPADAIRPDTE. 2 residues coordinate [3Fe-4S] cluster: cysteine 9 and cysteine 17. Positions 21, 40, 43, and 46 each coordinate [4Fe-4S] cluster. Position 50 (cysteine 50) interacts with [3Fe-4S] cluster. Over residues 85–103 the composition is skewed to basic and acidic residues; the sequence is DPMPDHKKYDGETGKREKY. The segment at 85–112 is disordered; the sequence is DPMPDHKKYDGETGKREKYFSPNPGTGD.

Requires [4Fe-4S] cluster as cofactor. It depends on [3Fe-4S] cluster as a cofactor.

Ferredoxins are iron-sulfur proteins that transfer electrons in a wide variety of metabolic reactions. The sequence is that of Ferredoxin-2 (fdxA) from Rhodobacter capsulatus (strain ATCC BAA-309 / NBRC 16581 / SB1003).